The following is a 305-amino-acid chain: Phospho-N-acetylmuramoyl-pentapeptide-transferase (305 aa).

9 helical membrane-spanning segments follow: residues 1-21 (MLMV…RASK), 46-66 (AGGV…YLSG), 73-93 (ELLI…DDWL), 113-133 (FPLQ…LASH), 139-159 (LGPV…VNAF), 174-194 (IIVL…VAVL), 207-227 (VFMG…AYIL), 233-253 (LLPI…IQVI), and 282-302 (VTIR…WLLG).

Belongs to the glycosyltransferase 4 family. MraY subfamily. It depends on Mg(2+) as a cofactor.

It is found in the cell membrane. It carries out the reaction UDP-N-acetyl-alpha-D-muramoyl-L-alanyl-gamma-D-glutamyl-meso-2,6-diaminopimeloyl-D-alanyl-D-alanine + di-trans,octa-cis-undecaprenyl phosphate = di-trans,octa-cis-undecaprenyl diphospho-N-acetyl-alpha-D-muramoyl-L-alanyl-D-glutamyl-meso-2,6-diaminopimeloyl-D-alanyl-D-alanine + UMP. It participates in cell wall biogenesis; peptidoglycan biosynthesis. In terms of biological role, catalyzes the initial step of the lipid cycle reactions in the biosynthesis of the cell wall peptidoglycan: transfers peptidoglycan precursor phospho-MurNAc-pentapeptide from UDP-MurNAc-pentapeptide onto the lipid carrier undecaprenyl phosphate, yielding undecaprenyl-pyrophosphoryl-MurNAc-pentapeptide, known as lipid I. This is Phospho-N-acetylmuramoyl-pentapeptide-transferase from Deinococcus deserti (strain DSM 17065 / CIP 109153 / LMG 22923 / VCD115).